Here is a 513-residue protein sequence, read N- to C-terminus: Membrane-bound transcription factor site-2 protease homolog (513 aa).

Topologically, residues 1-60 are cytoplasmic; sequence MEISGRRMRRFRMRFRRDHLTGGENIENEASCCYCDLKISNFNEPIFRLGRRFSGVLKVW. Residues 61–81 form a helical membrane-spanning segment; that stretch reads FSIGLGFGVASLILVTVFLLL. At 82–107 the chain is on the lumenal side; sequence QFHSNPLFSNRLTSAVFGFSPSTRVS. Residues 108-128 form a helical membrane-spanning segment; sequence LSGIAYVLVSTVITVSVHELG. His-125 provides a ligand contact to Zn(2+). Glu-126 is an active-site residue. His-129 is a binding site for Zn(2+). At 129–137 the chain is on the cytoplasmic side; the sequence is HALAAASEG. The helical transmembrane segment at 138–158 threads the bilayer; it reads IQMEYIAVFIAAIFPGGLVAF. The Lumenal segment spans residues 159–182; sequence DNDVLQSLPSFNALRIYCAGIWHN. Residues 183 to 203 traverse the membrane as a helical segment; sequence AVFCALCVFALFLLPVMLSPF. Over 204-437 the chain is Cytoplasmic; it reads YKHGESLTVV…KSFPNILERS (234 aa). Residues 438-458 form a helical membrane-spanning segment; that stretch reads LTCTFHVSLALVLLNSLPVYY. At 459 to 485 the chain is on the lumenal side; that stretch reads LDGESILESSLQSFTWLSPRKKKKALQ. Residues 486 to 506 traverse the membrane as a helical segment; the sequence is VCLVGGSLLSFLAFFRIFLLG. Over 507-513 the chain is Cytoplasmic; it reads LPLSRRW.

The protein belongs to the peptidase M50A family. Requires Zn(2+) as cofactor. As to expression, expressed in the vasculature of roots, cotyledons and leaves.

The protein localises to the golgi apparatus membrane. Metalloprotease that catalyzes the second step (site-2 cleavage) in the proteolytic activation of various factors, after site-1 cleavage. Part of a regulated intramembrane proteolysis (RIP) cascade. After ER stress, cleaves BZIP17 and BZIP28 proteins which function as stress sensors and transducers in ER stress signaling pathway. The N-terminal bZIP component is translocated to the nucleus, where it activates the expression and production of ER chaperones, as well as proteins involved in brassinosteroid (BR) signaling, which is required for stress acclimation and growth. This is Membrane-bound transcription factor site-2 protease homolog (S2P) from Arabidopsis thaliana (Mouse-ear cress).